The following is a 448-amino-acid chain: Maltoporin (448 aa).

The signal sequence occupies residues 1–25 (MMITLRKLPLAVAVMAGIFAAQASA).

The protein belongs to the porin LamB (TC 1.B.3) family. As to quaternary structure, homotrimer formed of three 18-stranded antiparallel beta-barrels, containing three independent channels.

Its subcellular location is the cell outer membrane. It carries out the reaction beta-maltose(in) = beta-maltose(out). Its function is as follows. Involved in the transport of maltose and maltodextrins. In Cronobacter sakazakii (strain ATCC BAA-894) (Enterobacter sakazakii), this protein is Maltoporin.